Here is a 411-residue protein sequence, read N- to C-terminus: Serine hydroxymethyltransferase (411 aa).

(6S)-5,6,7,8-tetrahydrofolate contacts are provided by residues L119 and 123-125 (GHL). K228 carries the post-translational modification N6-(pyridoxal phosphate)lysine. A (6S)-5,6,7,8-tetrahydrofolate-binding site is contributed by 351–353 (SPF).

It belongs to the SHMT family. As to quaternary structure, homodimer. The cofactor is pyridoxal 5'-phosphate.

It is found in the cytoplasm. The enzyme catalyses (6R)-5,10-methylene-5,6,7,8-tetrahydrofolate + glycine + H2O = (6S)-5,6,7,8-tetrahydrofolate + L-serine. The protein operates within one-carbon metabolism; tetrahydrofolate interconversion. It participates in amino-acid biosynthesis; glycine biosynthesis; glycine from L-serine: step 1/1. In terms of biological role, catalyzes the reversible interconversion of serine and glycine with tetrahydrofolate (THF) serving as the one-carbon carrier. This reaction serves as the major source of one-carbon groups required for the biosynthesis of purines, thymidylate, methionine, and other important biomolecules. Also exhibits THF-independent aldolase activity toward beta-hydroxyamino acids, producing glycine and aldehydes, via a retro-aldol mechanism. In Clostridium botulinum (strain Eklund 17B / Type B), this protein is Serine hydroxymethyltransferase.